The following is an 800-amino-acid chain: Kolavenyl diphosphate synthase TPS5, chloroplastic (800 aa).

The transit peptide at 1 to 75 (MSLAYSQATS…VILTAEKSVD (75 aa)) directs the protein to the chloroplast. A substrate-binding site is contributed by K244. Mg(2+) is bound by residues D375 and D377. Positions 375-378 (DVDD) match the DXDD motif motif. K461 provides a ligand contact to substrate.

It belongs to the terpene synthase family. Mg(2+) is required as a cofactor. Mostly expressed in trichomes of leaves and fruits.

It localises to the plastid. It is found in the chloroplast. It carries out the reaction (2E,6E,10E)-geranylgeranyl diphosphate = (+)-kolavenyl diphosphate. It participates in secondary metabolite biosynthesis; terpenoid biosynthesis. Involved in the biosynthesis of labdane-type diterpenoid including cleroda-dienols, and peregrinol lactones and furan derivatives, dopaminergic diterpenoids that can bind to dopamine receptors in the human pituitary gland, have probably ability to lower prolactin levels, and are used to treat menstrual cycle disorders (e.g. premenstrual syndrome and mastodynia). Terpene synthase that produces kolavenyl diphosphate from geranylgeranyl diphosphate (GGPP). This chain is Kolavenyl diphosphate synthase TPS5, chloroplastic, found in Vitex agnus-castus (Chaste tree).